A 393-amino-acid polypeptide reads, in one-letter code: Chorismate synthase (393 aa).

The NADP(+) site is built by arginine 40 and arginine 46. FMN contacts are provided by residues 129–131 (RAS), 251–252 (QA), glycine 301, 316–320 (KPIST), and arginine 342.

It belongs to the chorismate synthase family. In terms of assembly, homotetramer. FMNH2 is required as a cofactor.

The catalysed reaction is 5-O-(1-carboxyvinyl)-3-phosphoshikimate = chorismate + phosphate. The protein operates within metabolic intermediate biosynthesis; chorismate biosynthesis; chorismate from D-erythrose 4-phosphate and phosphoenolpyruvate: step 7/7. In terms of biological role, catalyzes the anti-1,4-elimination of the C-3 phosphate and the C-6 proR hydrogen from 5-enolpyruvylshikimate-3-phosphate (EPSP) to yield chorismate, which is the branch point compound that serves as the starting substrate for the three terminal pathways of aromatic amino acid biosynthesis. This reaction introduces a second double bond into the aromatic ring system. This is Chorismate synthase from Koribacter versatilis (strain Ellin345).